We begin with the raw amino-acid sequence, 258 residues long: Peptidase inhibitor 15 (258 aa).

An N-terminal signal peptide occupies residues 1 to 19 (MIAISAVSSALLFSLLCEA). Residues 20–60 (STVVLLNSTDSSPPTNNFTDIEAALKAQLDSADIPKARRKR) constitute a propeptide that is removed on maturation. Residues Asn-26, Asn-36, and Asn-124 are each glycosylated (N-linked (GlcNAc...) asparagine). The 141-residue stretch at 71–211 (LDYHNQVRGK…RRAVYLVCNY (141 aa)) folds into the SCP domain.

Belongs to the CRISP family. Post-translationally, N-glycosylated. As to expression, weakly expressed. Expressed at low level in prostate, mammary gland, salivary gland and thyroid gland.

It localises to the secreted. Serine protease inhibitor which displays weak inhibitory activity against trypsin. May play a role in facial patterning during embryonic development. This Homo sapiens (Human) protein is Peptidase inhibitor 15 (PI15).